The chain runs to 253 residues: Indole-3-glycerol phosphate synthase (253 aa).

Belongs to the TrpC family.

It catalyses the reaction 1-(2-carboxyphenylamino)-1-deoxy-D-ribulose 5-phosphate + H(+) = (1S,2R)-1-C-(indol-3-yl)glycerol 3-phosphate + CO2 + H2O. The protein operates within amino-acid biosynthesis; L-tryptophan biosynthesis; L-tryptophan from chorismate: step 4/5. The protein is Indole-3-glycerol phosphate synthase of Bacillus mycoides (strain KBAB4) (Bacillus weihenstephanensis).